The following is a 162-amino-acid chain: Transcription elongation factor GreA (162 aa).

Residues 45–75 (ENAEYEAAREKQAFIEGRIKELEDMAARAEI) are a coiled coil.

The protein belongs to the GreA/GreB family.

Its function is as follows. Necessary for efficient RNA polymerase transcription elongation past template-encoded arresting sites. The arresting sites in DNA have the property of trapping a certain fraction of elongating RNA polymerases that pass through, resulting in locked ternary complexes. Cleavage of the nascent transcript by cleavage factors such as GreA or GreB allows the resumption of elongation from the new 3'terminus. GreA releases sequences of 2 to 3 nucleotides. The polypeptide is Transcription elongation factor GreA (Rickettsia canadensis (strain McKiel)).